A 268-amino-acid polypeptide reads, in one-letter code: Tryptophan synthase alpha chain (268 aa).

Catalysis depends on proton acceptor residues E49 and D60.

Belongs to the TrpA family. Tetramer of two alpha and two beta chains.

It catalyses the reaction (1S,2R)-1-C-(indol-3-yl)glycerol 3-phosphate + L-serine = D-glyceraldehyde 3-phosphate + L-tryptophan + H2O. Its pathway is amino-acid biosynthesis; L-tryptophan biosynthesis; L-tryptophan from chorismate: step 5/5. The alpha subunit is responsible for the aldol cleavage of indoleglycerol phosphate to indole and glyceraldehyde 3-phosphate. This Yersinia pestis bv. Antiqua (strain Antiqua) protein is Tryptophan synthase alpha chain.